We begin with the raw amino-acid sequence, 231 residues long: Ribose-5-phosphate isomerase A (231 aa).

Substrate contacts are provided by residues 28-31 (TGST), 83-86 (DGAD), and 96-99 (KGGG). Residue Glu105 is the Proton acceptor of the active site. Position 123 (Lys123) interacts with substrate.

This sequence belongs to the ribose 5-phosphate isomerase family. As to quaternary structure, homodimer.

The catalysed reaction is aldehydo-D-ribose 5-phosphate = D-ribulose 5-phosphate. It participates in carbohydrate degradation; pentose phosphate pathway; D-ribose 5-phosphate from D-ribulose 5-phosphate (non-oxidative stage): step 1/1. Catalyzes the reversible conversion of ribose-5-phosphate to ribulose 5-phosphate. In Sinorhizobium medicae (strain WSM419) (Ensifer medicae), this protein is Ribose-5-phosphate isomerase A.